The primary structure comprises 587 residues: Aspartate--tRNA ligase (587 aa).

Glutamate 174 contributes to the L-aspartate binding site. The aspartate stretch occupies residues 198 to 201 (QITK). Arginine 220 contacts L-aspartate. ATP-binding positions include 220 to 222 (RDE) and glutamine 229. Histidine 443 lines the L-aspartate pocket. Glutamate 477 provides a ligand contact to ATP. Arginine 484 is an L-aspartate binding site. Position 529-532 (529-532 (GLDR)) interacts with ATP.

Belongs to the class-II aminoacyl-tRNA synthetase family. Type 1 subfamily. As to quaternary structure, homodimer.

The protein resides in the cytoplasm. It carries out the reaction tRNA(Asp) + L-aspartate + ATP = L-aspartyl-tRNA(Asp) + AMP + diphosphate. Functionally, catalyzes the attachment of L-aspartate to tRNA(Asp) in a two-step reaction: L-aspartate is first activated by ATP to form Asp-AMP and then transferred to the acceptor end of tRNA(Asp). This is Aspartate--tRNA ligase from Streptococcus pneumoniae (strain 70585).